Consider the following 225-residue polypeptide: PKHD-type hydroxylase YbiX (225 aa).

One can recognise a Fe2OG dioxygenase domain in the interval 78 to 177; sequence TLSTPLFNRY…RVASFMWIQS (100 aa). Fe cation-binding residues include His96, Asp98, and His158. Arg168 is a 2-oxoglutarate binding site.

The cofactor is Fe(2+). L-ascorbate serves as cofactor.

The protein is PKHD-type hydroxylase YbiX of Escherichia coli (strain 55989 / EAEC).